Reading from the N-terminus, the 233-residue chain is MIDQKVIVALDYDNQADALAFVDRIDPASCRLKVGKEMFTLFGPDFVRELHKRGFSVFLDLKFHDIPNTCSKAVRAAAELGVWMVNVHASGGERMMTASREILEPYGKDRPLLIGVTVLTSMEQSDLAGIGLNVEPQEQVIRLATLTKNSGLDGVVCSAQESSLLKNELGKEFKLITPGIRPAGSDQGDQRRIMTPVDAIQAGSDYLVIGRPITQATDPAAVLKSINDSLASK.

Substrate contacts are provided by residues D11, K33, 60 to 69, T120, R181, Q190, G210, and R211; that span reads DLKFHDIPNT. K62 serves as the catalytic Proton donor.

This sequence belongs to the OMP decarboxylase family. Type 1 subfamily. As to quaternary structure, homodimer.

It carries out the reaction orotidine 5'-phosphate + H(+) = UMP + CO2. The protein operates within pyrimidine metabolism; UMP biosynthesis via de novo pathway; UMP from orotate: step 2/2. Catalyzes the decarboxylation of orotidine 5'-monophosphate (OMP) to uridine 5'-monophosphate (UMP). The protein is Orotidine 5'-phosphate decarboxylase of Vibrio parahaemolyticus serotype O3:K6 (strain RIMD 2210633).